The chain runs to 113 residues: Hydrogenase maturation factor HypA (113 aa).

A Ni(2+)-binding site is contributed by His2. The Zn(2+) site is built by Cys73, Cys76, Cys89, and Cys92.

It belongs to the HypA/HybF family.

Its function is as follows. Involved in the maturation of [NiFe] hydrogenases. Required for nickel insertion into the metal center of the hydrogenase. This Aeromonas salmonicida (strain A449) protein is Hydrogenase maturation factor HypA.